The sequence spans 316 residues: Nucleoside diphosphate-linked moiety X motif 6 (316 aa).

Residues 141–273 enclose the Nudix hydrolase domain; the sequence is SHQVGVAGAV…TSRVARLLLY (133 aa). A Nudix box motif is present at residues 176–197; sequence GLSEPEEDIGDTAVREVFEETG.

It belongs to the Nudix hydrolase family. As to quaternary structure, monomer and homodimer. As to expression, detected in liver, kidney and esophagus (at protein level). Ubiquitous.

The protein resides in the cytoplasm. It is found in the nucleus. The protein localises to the mitochondrion. In terms of biological role, may contribute to the regulation of cell proliferation. This is Nucleoside diphosphate-linked moiety X motif 6 (NUDT6) from Homo sapiens (Human).